Consider the following 518-residue polypeptide: Cytochrome P450 709B3 (518 aa).

Residues Leu3 to Trp23 form a helical membrane-spanning segment. Residue Cys465 participates in heme binding.

Belongs to the cytochrome P450 family. The cofactor is heme. As to expression, highly expressed in rosette leaves and siliques, and at lower levels in flowers.

Its subcellular location is the membrane. In terms of biological role, plays a role in abscisic acid (ABA) and salt stress response. May regulate the salt stress response independently of well-characterized pathways. Does not function as cytokinin hydroxylase in yeast heterologous system. The polypeptide is Cytochrome P450 709B3 (Arabidopsis thaliana (Mouse-ear cress)).